We begin with the raw amino-acid sequence, 503 residues long: Probable cytosol aminopeptidase (503 aa).

Positions 274 and 279 each coordinate Mn(2+). K286 is a catalytic residue. Residues D297, D356, and E358 each coordinate Mn(2+). R360 is an active-site residue.

The protein belongs to the peptidase M17 family. Mn(2+) serves as cofactor.

It localises to the cytoplasm. The catalysed reaction is Release of an N-terminal amino acid, Xaa-|-Yaa-, in which Xaa is preferably Leu, but may be other amino acids including Pro although not Arg or Lys, and Yaa may be Pro. Amino acid amides and methyl esters are also readily hydrolyzed, but rates on arylamides are exceedingly low.. It carries out the reaction Release of an N-terminal amino acid, preferentially leucine, but not glutamic or aspartic acids.. Functionally, presumably involved in the processing and regular turnover of intracellular proteins. Catalyzes the removal of unsubstituted N-terminal amino acids from various peptides. This Burkholderia multivorans (strain ATCC 17616 / 249) protein is Probable cytosol aminopeptidase.